Consider the following 215-residue polypeptide: Protein GrpE (215 aa).

Residues 1-28 (MKHTSDTPSNSDMPSDSQATQPNASATG) are compositionally biased toward polar residues. A disordered region spans residues 1–52 (MKHTSDTPSNSDMPSDSQATQPNASATGQAAHAYSSQAQRASADAQAVAGDE). The span at 29–52 (QAAHAYSSQAQRASADAQAVAGDE) shows a compositional bias: low complexity.

It belongs to the GrpE family. In terms of assembly, homodimer.

Its subcellular location is the cytoplasm. Participates actively in the response to hyperosmotic and heat shock by preventing the aggregation of stress-denatured proteins, in association with DnaK and GrpE. It is the nucleotide exchange factor for DnaK and may function as a thermosensor. Unfolded proteins bind initially to DnaJ; upon interaction with the DnaJ-bound protein, DnaK hydrolyzes its bound ATP, resulting in the formation of a stable complex. GrpE releases ADP from DnaK; ATP binding to DnaK triggers the release of the substrate protein, thus completing the reaction cycle. Several rounds of ATP-dependent interactions between DnaJ, DnaK and GrpE are required for fully efficient folding. This is Protein GrpE from Ralstonia pickettii (strain 12J).